The sequence spans 286 residues: Acyl-CoA-binding domain-containing protein 6 (286 aa).

The ACB domain occupies 32–117; sequence LQCQFEQAAK…VKKLDPDWSP (86 aa). Residues 59-63, Lys85, and Tyr104 each bind an acyl-CoA; that span reads YARYK. ANK repeat units follow at residues 182 to 211 and 215 to 244; these read EGRS…HINM and EGQT…DPSL.

Its subcellular location is the cytoplasm. The protein localises to the nucleus. Its function is as follows. Binds long-chain acyl-coenzyme A molecules with a strong preference for unsaturated C18:1-CoA. Does not bind fatty acids. Plays a role in protein N-myristoylation. This chain is Acyl-CoA-binding domain-containing protein 6 (acbd6), found in Xenopus laevis (African clawed frog).